Consider the following 621-residue polypeptide: Pentatricopeptide repeat-containing protein At3g48250, chloroplastic (621 aa).

The N-terminal 67 residues, 1–67 (MYRSMAILSS…SKPDSMLQLV (67 aa)), are a transit peptide targeting the chloroplast. PPR repeat units follow at residues 122–156 (STPL…GFYL), 157–194 (DEDT…NAMS), 262–296 (STVT…GYDM), 297–331 (DLDT…PFKP), 332–368 (SIQD…GKSL), 369–403 (SKAV…GYEP), 404–438 (DNIT…GCFP), 439–473 (DIKT…GFDI), 474–509 (DSNL…NVKP), and 510–544 (WQST…NYPA).

This sequence belongs to the PPR family. P subfamily.

It is found in the plastid. The protein localises to the chloroplast. The chain is Pentatricopeptide repeat-containing protein At3g48250, chloroplastic from Arabidopsis thaliana (Mouse-ear cress).